Reading from the N-terminus, the 676-residue chain is Basic proline-rich protein (676 aa).

The first 16 residues, 1-16, serve as a signal peptide directing secretion; that stretch reads MLPILLSVALLALSSA. Ser28 and Ser30 each carry phosphoserine. A disordered region spans residues 29 to 676; it reads NSAEKFLRPP…PRPPPGPPPQ (648 aa). Pro residues-rich tracts occupy residues 36-50, 71-424, and 442-676; these read RPPP…PPPE, GPAP…PPAD, and PPPA…PPPQ. Residues 409–457 constitute a propeptide that is removed on maturation; sequence APPGARPPPPPPPPADEPQQGPAPSGDKPKKKPPPPAGPPPPGPPSPGP.

Acinar cells and secretory granules of the parotid gland.

It is found in the secreted. In terms of biological role, the parotid hormone stimulates dentinal fluid transport in teeth. The chain is Basic proline-rich protein from Sus scrofa (Pig).